Here is a 334-residue protein sequence, read N- to C-terminus: Ornithine carbamoyltransferase subunit I (334 aa).

Carbamoyl phosphate-binding positions include 56–59 (STRT), Gln83, Arg107, and 134–137 (HPTQ). Residues Asn168, Asp232, and 236 to 237 (SM) each bind L-ornithine. Cys274 serves as a coordination point for Zn(2+). Carbamoyl phosphate contacts are provided by residues 274–275 (CL) and Arg320.

This sequence belongs to the aspartate/ornithine carbamoyltransferase superfamily. OTCase family. As to quaternary structure, in E.coli strain K12, trimer of identical or non-identical chains are composed of ArgI (I) and/or ArgF (F). The trimer has the following composition: FFI, FFF, FII, III. E.coli strains B and W, which are known to contain only ArgI, produce only a trimer of identical chains (III).

It localises to the cytoplasm. The catalysed reaction is carbamoyl phosphate + L-ornithine = L-citrulline + phosphate + H(+). Its pathway is amino-acid biosynthesis; L-arginine biosynthesis; L-arginine from L-ornithine and carbamoyl phosphate: step 1/3. Its activity is regulated as follows. Reversely inhibited by N-(N-Sulfodiaminophosphinyl)-L-ornithine. Zinc is an allosteric regulator of the substrate-bound enzyme and a competitive inhibitor of the free enzyme. Reversibly catalyzes the transfer of the carbamoyl group from carbamoyl phosphate (CP) to the N(epsilon) atom of ornithine (ORN) to produce L-citrulline, which is a substrate for argininosuccinate synthetase, the enzyme involved in the final step in arginine biosynthesis. This chain is Ornithine carbamoyltransferase subunit I, found in Escherichia coli (strain K12).